A 270-amino-acid polypeptide reads, in one-letter code: Replication protein A 32 kDa subunit (270 aa).

Methionine 1 is subject to N-acetylmethionine. Serine 4 and serine 8 each carry phosphoserine; by PRKDC. Phosphothreonine; by PRKDC is present on threonine 21. The tract at residues 21–40 is disordered; that stretch reads TQSPGGFGSPAPSQAEKKSR. Serine 23 is subject to Phosphoserine; by CDK2. The residue at position 29 (serine 29) is a Phosphoserine; by CDK1. Serine 33 carries the post-translational modification Phosphoserine; by PRKDC. Residues lysine 37 and lysine 38 each participate in a glycyl lysine isopeptide (Lys-Gly) (interchain with G-Cter in ubiquitin) cross-link. Positions 74 to 148 form a DNA-binding region, OB; it reads VTIVGIIRHA…KSLVAFKIMP (75 aa). The interaction with RAD52, TIPIN, UNG and XPA stretch occupies residues 187–270; it reads GMSEAGNFGG…DDHFKSTDAE (84 aa).

Belongs to the replication factor A protein 2 family. In terms of assembly, component of the replication protein A complex (RPA/RP-A), a heterotrimeric complex composed of RPA1, RPA2 and RPA3. Interacts with PRPF19; the PRP19-CDC5L complex is recruited to the sites of DNA repair where it ubiquitinates the replication protein A complex (RPA). Interacts with SERTAD3. Interacts with TIPIN. Interacts with TIMELESS. Interacts with PPP4R2; the interaction is direct, DNA damage-dependent and mediates the recruitment of the PP4 catalytic subunit PPP4C. Interacts (hyperphosphorylated) with RAD51. Interacts with SMARCAL1; the interaction is direct and mediates the recruitment to the RPA complex of SMARCAL1. Interacts with RAD52 and XPA; those interactions are direct and associate RAD52 and XPA to the RPA complex. Interacts with FBH1. Interacts with ETAA1; the interaction is direct and promotes ETAA1 recruitment at stalled replication forks. Interacts with DDI2. Interacts (in unphosphorylated form via N-terminus) with EIF4EBP3; the interaction enhances EIF4EBP3-mediated inhibition of EIF4E-mediated mRNA nuclear export. In terms of processing, differentially phosphorylated throughout the cell cycle, becoming phosphorylated at the G1-S transition and dephosphorylated in late mitosis. Mainly phosphorylated at Ser-23 and Ser-29, by cyclin A-CDK2 and cyclin B-CDK1, respectively during DNA replication and mitosis. Dephosphorylation may require the serine/threonine-protein phosphatase 4. Phosphorylation at Ser-23 and Ser-29 is a prerequisite for further phosphorylation. Becomes hyperphosphorylated on additional residues including Ser-4, Ser-8, Thr-21 and Ser-33 in response to DNA damage. Hyperphosphorylation is mediated by ATM, ATR and PRKDC. Primarily recruited to DNA repair nuclear foci as a hypophosphorylated form it undergoes subsequent hyperphosphorylation, catalyzed by ATR. Hyperphosphorylation is required for RAD51 recruitment to chromatin and efficient DNA repair. Phosphorylation at Thr-21 depends upon RFWD3 presence. Post-translationally, DNA damage-induced 'Lys-63'-linked polyubiquitination by PRPF19 mediates ATRIP recruitment to the RPA complex at sites of DNA damage and activation of ATR. Ubiquitinated by RFWD3 at stalled replication forks in response to DNA damage: ubiquitination by RFWD3 does not lead to degradation by the proteasome and promotes removal of the RPA complex from stalled replication forks, promoting homologous recombination.

The protein resides in the nucleus. Its subcellular location is the PML body. Its function is as follows. As part of the heterotrimeric replication protein A complex (RPA/RP-A), binds and stabilizes single-stranded DNA intermediates, that form during DNA replication or upon DNA stress. It prevents their reannealing and in parallel, recruits and activates different proteins and complexes involved in DNA metabolism. Thereby, it plays an essential role both in DNA replication and the cellular response to DNA damage. In the cellular response to DNA damage, the RPA complex controls DNA repair and DNA damage checkpoint activation. Through recruitment of ATRIP activates the ATR kinase a master regulator of the DNA damage response. It is required for the recruitment of the DNA double-strand break repair factors RAD51 and RAD52 to chromatin in response to DNA damage. Also recruits to sites of DNA damage proteins like XPA and XPG that are involved in nucleotide excision repair and is required for this mechanism of DNA repair. Also plays a role in base excision repair (BER) probably through interaction with UNG. Also recruits SMARCAL1/HARP, which is involved in replication fork restart, to sites of DNA damage. May also play a role in telomere maintenance. This Pongo abelii (Sumatran orangutan) protein is Replication protein A 32 kDa subunit (RPA2).